Consider the following 212-residue polypeptide: Thymidine kinase (212 aa).

Residues 11–18 (SPMNAGKT), 43–45 (DTR), and 86–89 (DEAQ) each bind ATP. The active-site Proton acceptor is Glu87. Phe119 is a binding site for substrate. Zn(2+) contacts are provided by Cys144, Cys147, Cys183, and Cys186.

The protein belongs to the thymidine kinase family.

The catalysed reaction is thymidine + ATP = dTMP + ADP + H(+). The chain is Thymidine kinase (TK) from Encephalitozoon cuniculi (strain GB-M1) (Microsporidian parasite).